Reading from the N-terminus, the 698-residue chain is Polyribonucleotide nucleotidyltransferase (698 aa).

Residues Asp-485 and Asp-491 each contribute to the Mg(2+) site. Residues 552–611 form the KH domain; sequence PRIHTIKINTDKIRDVIGKGGAVIRSLCEETGTTIEIEDDGTVKIAATSGEQADDAINRI. In terms of domain architecture, S1 motif spans 621 to 689; it reads GTIYTGKVVR…RQGRVRLSIK (69 aa).

This sequence belongs to the polyribonucleotide nucleotidyltransferase family. As to quaternary structure, component of the RNA degradosome, which is a multiprotein complex involved in RNA processing and mRNA degradation. Mg(2+) serves as cofactor.

It localises to the cytoplasm. The enzyme catalyses RNA(n+1) + phosphate = RNA(n) + a ribonucleoside 5'-diphosphate. Functionally, involved in mRNA degradation. Catalyzes the phosphorolysis of single-stranded polyribonucleotides processively in the 3'- to 5'-direction. The polypeptide is Polyribonucleotide nucleotidyltransferase (Psychromonas ingrahamii (strain DSM 17664 / CCUG 51855 / 37)).